Here is a 194-residue protein sequence, read N- to C-terminus: Putative lipoprotein LppK (194 aa).

Residues 1-26 (MSRWTHRTFFIALSAIVTTAGFGSSG) form the signal peptide. Cysteine 27 carries N-palmitoyl cysteine lipidation. The S-diacylglycerol cysteine moiety is linked to residue cysteine 27. The interval 174 to 194 (GNSSGLTNPAPIKAPTPTPSH) is disordered. The segment covering 185–194 (IKAPTPTPSH) has biased composition (pro residues).

Belongs to the MTB12 family.

The protein resides in the cell membrane. In Mycobacterium leprae (strain TN), this protein is Putative lipoprotein LppK (lppK).